The following is a 574-amino-acid chain: Serine carboxypeptidase ctsa-3.1 (574 aa).

The first 19 residues, 1–19 (MCRTLLGVAFLVVTVLSQG), serve as a signal peptide directing secretion. Residues asparagine 48 and asparagine 163 are each glycosylated (N-linked (GlcNAc...) asparagine). The active site involves serine 172. N-linked (GlcNAc...) asparagine glycosylation is found at asparagine 241, asparagine 408, asparagine 414, and asparagine 426. Catalysis depends on residues aspartate 441 and histidine 507. N-linked (GlcNAc...) asparagine glycosylation occurs at asparagine 534.

This sequence belongs to the peptidase S10 family.

This chain is Serine carboxypeptidase ctsa-3.1, found in Caenorhabditis elegans.